The sequence spans 363 residues: Ankyrin repeat domain-containing protein 40 (363 aa).

Met1 bears the N-acetylmethionine mark. ANK repeat units lie at residues 9 to 38 and 43 to 72; these read EQQE…DVNS and NGWT…DREI. Positions 135–167 are disordered; sequence DSTQLQNGGPSPPPVSPPADSSPPLLPPTETPL. A compositionally biased stretch (pro residues) spans 144–164; sequence PSPPPVSPPADSSPPLLPPTE. Ser176 bears the Phosphoserine mark.

The chain is Ankyrin repeat domain-containing protein 40 (Ankrd40) from Mus musculus (Mouse).